A 182-amino-acid chain; its full sequence is Putative CTD phosphatase-like protein 355R (182 aa).

Residues 1-180 form the FCP1 homology domain; the sequence is MKNIFLDLDN…MRLKDVLNRH (180 aa).

It belongs to the IIV-6 355R family.

May function as a phosphatase. The sequence is that of Putative CTD phosphatase-like protein 355R from Invertebrate iridescent virus 6 (IIV-6).